Here is a 178-residue protein sequence, read N- to C-terminus: Large ribosomal subunit protein uL6 (178 aa).

It belongs to the universal ribosomal protein uL6 family. In terms of assembly, part of the 50S ribosomal subunit.

Functionally, this protein binds to the 23S rRNA, and is important in its secondary structure. It is located near the subunit interface in the base of the L7/L12 stalk, and near the tRNA binding site of the peptidyltransferase center. The protein is Large ribosomal subunit protein uL6 of Ligilactobacillus salivarius (strain UCC118) (Lactobacillus salivarius).